Reading from the N-terminus, the 484-residue chain is ATP synthase subunit beta, chloroplastic (484 aa).

Position 163–170 (163–170 (GGAGVGKT)) interacts with ATP.

The protein belongs to the ATPase alpha/beta chains family. In terms of assembly, F-type ATPases have 2 components, CF(1) - the catalytic core - and CF(0) - the membrane proton channel. CF(1) has five subunits: alpha(3), beta(3), gamma(1), delta(1), epsilon(1). CF(0) has four main subunits: a(1), b(1), b'(1) and c(9-12).

The protein resides in the plastid. It is found in the chloroplast thylakoid membrane. It carries out the reaction ATP + H2O + 4 H(+)(in) = ADP + phosphate + 5 H(+)(out). Functionally, produces ATP from ADP in the presence of a proton gradient across the membrane. The catalytic sites are hosted primarily by the beta subunits. This is ATP synthase subunit beta, chloroplastic from Stigeoclonium helveticum (Green alga).